A 160-amino-acid polypeptide reads, in one-letter code: Large ribosomal subunit protein bL17 (160 aa).

Residues 128-160 form a disordered region; sequence KKATKTRRSRKRKSADVVVEAAPAEETPKAAEE. The segment covering 129–140 has biased composition (basic residues); it reads KATKTRRSRKRK.

The protein belongs to the bacterial ribosomal protein bL17 family. In terms of assembly, part of the 50S ribosomal subunit. Contacts protein L32.

This is Large ribosomal subunit protein bL17 from Porphyromonas gingivalis (strain ATCC 33277 / DSM 20709 / CIP 103683 / JCM 12257 / NCTC 11834 / 2561).